Here is a 120-residue protein sequence, read N- to C-terminus: Small ribosomal subunit protein uS13 (120 aa).

The tract at residues 93 to 120 (RRGLPCRGQKTKTNARTRKGKRKTVGAA) is disordered.

Belongs to the universal ribosomal protein uS13 family. As to quaternary structure, part of the 30S ribosomal subunit. Forms a loose heterodimer with protein S19. Forms two bridges to the 50S subunit in the 70S ribosome.

Its function is as follows. Located at the top of the head of the 30S subunit, it contacts several helices of the 16S rRNA. In the 70S ribosome it contacts the 23S rRNA (bridge B1a) and protein L5 of the 50S subunit (bridge B1b), connecting the 2 subunits; these bridges are implicated in subunit movement. Contacts the tRNAs in the A and P-sites. The chain is Small ribosomal subunit protein uS13 from Sulfurovum sp. (strain NBC37-1).